The following is a 906-amino-acid chain: Protein translocase subunit SecA (906 aa).

ATP-binding positions include glutamine 87, 105–109 (GEGKT), and aspartate 512. The disordered stretch occupies residues 839 to 896 (LEEQQRQQSEAAPRTYTHATAESQLADEEAAGEEGHTTFVRDEQKIGRNDPCPCGSGK). Basic and acidic residues predominate over residues 871-886 (EEGHTTFVRDEQKIGR). The Zn(2+) site is built by cysteine 890, cysteine 892, cysteine 901, and histidine 902.

It belongs to the SecA family. Monomer and homodimer. Part of the essential Sec protein translocation apparatus which comprises SecA, SecYEG and auxiliary proteins SecDF-YajC and YidC. The cofactor is Zn(2+).

The protein resides in the cell inner membrane. It is found in the cytoplasm. It carries out the reaction ATP + H2O + cellular proteinSide 1 = ADP + phosphate + cellular proteinSide 2.. Functionally, part of the Sec protein translocase complex. Interacts with the SecYEG preprotein conducting channel. Has a central role in coupling the hydrolysis of ATP to the transfer of proteins into and across the cell membrane, serving both as a receptor for the preprotein-SecB complex and as an ATP-driven molecular motor driving the stepwise translocation of polypeptide chains across the membrane. This chain is Protein translocase subunit SecA, found in Aeromonas salmonicida (strain A449).